Here is a 506-residue protein sequence, read N- to C-terminus: Probable Xaa-Pro aminopeptidase BDCG_04966 (506 aa).

The Mn(2+) site is built by aspartate 285, aspartate 296, glutamate 433, and glutamate 471.

The protein belongs to the peptidase M24B family. Mn(2+) serves as cofactor.

The enzyme catalyses Release of any N-terminal amino acid, including proline, that is linked to proline, even from a dipeptide or tripeptide.. In terms of biological role, catalyzes the removal of a penultimate prolyl residue from the N-termini of peptides. The chain is Probable Xaa-Pro aminopeptidase BDCG_04966 from Ajellomyces dermatitidis (strain ER-3 / ATCC MYA-2586) (Blastomyces dermatitidis).